The primary structure comprises 669 residues: DNA mismatch repair protein MutL (669 aa).

2 disordered regions span residues 354 to 402 (NRPA…ENPY) and 448 to 479 (TVSH…PLES). A compositionally biased stretch (polar residues) spans 448 to 468 (TVSHDSPPNRTAPDATTSSSK).

The protein belongs to the DNA mismatch repair MutL/HexB family.

This protein is involved in the repair of mismatches in DNA. It is required for dam-dependent methyl-directed DNA mismatch repair. May act as a 'molecular matchmaker', a protein that promotes the formation of a stable complex between two or more DNA-binding proteins in an ATP-dependent manner without itself being part of a final effector complex. In Pectobacterium carotovorum subsp. carotovorum (strain PC1), this protein is DNA mismatch repair protein MutL.